A 152-amino-acid chain; its full sequence is UPF0225 protein Ent638_2310 (152 aa).

Belongs to the UPF0225 family.

The polypeptide is UPF0225 protein Ent638_2310 (Enterobacter sp. (strain 638)).